Here is a 733-residue protein sequence, read N- to C-terminus: uncharacterized protein (733 aa).

A helical transmembrane segment spans residues 174–194 (WAVMILASLRPELFGPIIIAG).

Its subcellular location is the membrane. This is an uncharacterized protein from Rhizobium meliloti (Ensifer meliloti).